The following is a 118-amino-acid chain: Turripeptide NCR-01 (118 aa).

The N-terminal stretch at 1–16 (MLRLILAVALVAACLA) is a signal peptide. Positions 63 to 118 (QGFQGFLPQPHQKRDSYQHGGYQHQQSFDNFQGSGGMNNDNSDDSFALRNFNNDGY) are disordered. Polar residues predominate over residues 85–102 (QHQQSFDNFQGSGGMNND).

Expressed by the venom duct.

It localises to the secreted. The chain is Turripeptide NCR-01 from Gemmula speciosa (Splendid gem-turris).